The sequence spans 564 residues: 4-hydroxybutyrate--CoA ligase 1 (564 aa).

Residues 105–125 (VHPMHWAVFLAVIKGGFVMVP) form a helical membrane-spanning segment. ATP is bound by residues 204–212 (TSGTTGMPK), 343–348 (DFYGQT), Asp429, and Arg444. Thr348 is a binding site for substrate. 452–454 (SDY) serves as a coordination point for CoA. Arg455 lines the substrate pocket. Residues Arg484, Lys513, and 521–523 (VPR) contribute to the CoA site. Residue Lys538 participates in ATP binding.

It belongs to the ATP-dependent AMP-binding enzyme family. It depends on Mg(2+) as a cofactor. Mn(2+) is required as a cofactor.

It is found in the membrane. It catalyses the reaction 4-hydroxybutanoate + ATP + CoA = 4-hydroxybutanoyl-CoA + AMP + diphosphate. The enzyme catalyses acetate + ATP + CoA = acetyl-CoA + AMP + diphosphate. The catalysed reaction is propanoate + ATP + CoA = propanoyl-CoA + AMP + diphosphate. It carries out the reaction a medium-chain fatty acid + ATP + CoA = a medium-chain fatty acyl-CoA + AMP + diphosphate. In terms of biological role, involved in the 3-hydroxypropionate/4-hydroxybutyrate cycle which incorporates carbon dioxide into cellular carbon. Catalyzes the ligation of coenzyme A (CoA) to 4-hydroxybutyrate (4HB). It can also use butyrate, valerate, propionate, acetate and 3-hydroxybutyrate (3HB) as substrates. This is 4-hydroxybutyrate--CoA ligase 1 from Metallosphaera sedula (strain ATCC 51363 / DSM 5348 / JCM 9185 / NBRC 15509 / TH2).